A 96-amino-acid polypeptide reads, in one-letter code: Large ribosomal subunit protein uL15 (96 aa).

Belongs to the universal ribosomal protein uL15 family. Part of the 50S ribosomal subunit.

Its function is as follows. Binds to the 23S rRNA. The polypeptide is Large ribosomal subunit protein uL15 (rplO) (Streptomyces scabiei).